A 201-amino-acid chain; its full sequence is ADP-ribosylation factor-like protein 4D (201 aa).

Glycine 2 carries N-myristoyl glycine lipidation. GTP-binding positions include 28–35 (GLDSAGKT), 76–80 (DVGGQ), and 135–138 (NKQD).

This sequence belongs to the small GTPase superfamily. Arf family. As to quaternary structure, interacts with CYTH2; the interaction is direct and ARL4D GTP-dependent. Does not interact with ARL4D.

Its subcellular location is the nucleus. It localises to the nucleolus. It is found in the cell membrane. The protein resides in the cytoplasm. In terms of biological role, small GTP-binding protein which cycles between an inactive GDP-bound and an active GTP-bound form, and the rate of cycling is regulated by guanine nucleotide exchange factors (GEF) and GTPase-activating proteins (GAP). GTP-binding protein that does not act as an allosteric activator of the cholera toxin catalytic subunit. Recruits CYTH1, CYTH2, CYTH3 and CYTH4 to the plasma membrane in GDP-bound form. In Mus musculus (Mouse), this protein is ADP-ribosylation factor-like protein 4D (Arl4d).